We begin with the raw amino-acid sequence, 442 residues long: Cysteine proteinase 4 (442 aa).

Residues 1–17 (MRVLSFLCLLLVSYASA) form the signal peptide. The propeptide at 18–111 (KQQFSELQYR…TEEEKIFSTP (94 aa)) is activation peptide. 2 cysteine pairs are disulfide-bonded: Cys132-Cys178 and Cys169-Cys212. Cys135 is an active-site residue. Residues Asn228 and Asn254 are each glycosylated (N-linked (GlcNAc...) asparagine). Cysteines 270 and 428 form a disulfide. His277 is a catalytic residue. A disordered region spans residues 286 to 396 (SGSSSSSGSS…SGSGSGAVEA (111 aa)). The segment covering 287-376 (GSSSSSGSSS…SASGQASASG (90 aa)) has biased composition (low complexity). A compositionally biased stretch (gly residues) spans 377–391 (SGSGSGSGSGSGSGS). Asn406 is a catalytic residue.

Belongs to the peptidase C1 family. In terms of processing, glycosylated; contains GlcNAc-alpha-1-P-Ser residues and fucose.

It is found in the lysosome. The chain is Cysteine proteinase 4 (cprD) from Dictyostelium discoideum (Social amoeba).